We begin with the raw amino-acid sequence, 305 residues long: Tyrosine recombinase XerC (305 aa).

Positions 4 to 95 (TSIQELINKW…AVKNFYKFLE (92 aa)) constitute a Core-binding (CB) domain. Positions 116 to 298 (LLPKSLSEDD…SIKHLVSVYT (183 aa)) constitute a Tyr recombinase domain. Catalysis depends on residues Arg159, Lys182, His250, Arg253, and His276. Tyr285 serves as the catalytic O-(3'-phospho-DNA)-tyrosine intermediate.

The protein belongs to the 'phage' integrase family. XerC subfamily. As to quaternary structure, forms a cyclic heterotetrameric complex composed of two molecules of XerC and two molecules of XerD.

The protein localises to the cytoplasm. Site-specific tyrosine recombinase, which acts by catalyzing the cutting and rejoining of the recombining DNA molecules. The XerC-XerD complex is essential to convert dimers of the bacterial chromosome into monomers to permit their segregation at cell division. It also contributes to the segregational stability of plasmids. The polypeptide is Tyrosine recombinase XerC (Rickettsia canadensis (strain McKiel)).